Here is a 123-residue protein sequence, read N- to C-terminus: Small ribosomal subunit protein uS12 (123 aa).

D89 carries the 3-methylthioaspartic acid modification.

It belongs to the universal ribosomal protein uS12 family. In terms of assembly, part of the 30S ribosomal subunit. Contacts proteins S8 and S17. May interact with IF1 in the 30S initiation complex.

In terms of biological role, with S4 and S5 plays an important role in translational accuracy. Interacts with and stabilizes bases of the 16S rRNA that are involved in tRNA selection in the A site and with the mRNA backbone. Located at the interface of the 30S and 50S subunits, it traverses the body of the 30S subunit contacting proteins on the other side and probably holding the rRNA structure together. The combined cluster of proteins S8, S12 and S17 appears to hold together the shoulder and platform of the 30S subunit. The sequence is that of Small ribosomal subunit protein uS12 from Rhizobium meliloti (strain 1021) (Ensifer meliloti).